The following is a 315-amino-acid chain: HTH-type transcriptional regulator TreR (315 aa).

Residues 5 to 59 enclose the HTH lacI-type domain; that stretch reads LTIKDIARLSGVGKSTVSRVLNNESGVSQLTRERVEAVMNQHGFSPSRSARAMRG. A DNA-binding region (H-T-H motif) is located at residues 7-26; the sequence is IKDIARLSGVGKSTVSRVLN. Alpha,alpha-trehalose 6-phosphate contacts are provided by residues 71–77, glycine 126, arginine 147, 187–190, arginine 194, threonine 242, and tyrosine 284; these read RLDSLSE and DVTT.

Homodimer.

Repressor of the treBC operon. It is able to bind trehalose-6-phosphate and trehalose. The sequence is that of HTH-type transcriptional regulator TreR (treR) from Escherichia coli (strain K12).